Reading from the N-terminus, the 354-residue chain is Histone-lysine N-methyltransferase SUVR3 (354 aa).

The Pre-SET domain maps to 143 to 188; that stretch reads SGCECERCEEGYCKCLAFAGMEEIANECGSGCGCGSDCSNRVTQKG. Residues Cys-145, Cys-147, Cys-150, Cys-155, Cys-157, Cys-170, Cys-174, Cys-176, and Cys-180 each contribute to the Zn(2+) site. Residues 191 to 323 form the SET domain; that stretch reads VSLKIVRDEK…AEEELSFSYG (133 aa). S-adenosyl-L-methionine is bound by residues 201-203 and 281-282; these read KGW and NH. Residue Cys-284 coordinates Zn(2+). Tyr-322 lines the S-adenosyl-L-methionine pocket. The Post-SET domain occupies 334–350; that stretch reads DKLNCSCGSSCCLGTLP. Residues Cys-338, Cys-340, and Cys-345 each contribute to the Zn(2+) site.

This sequence belongs to the class V-like SAM-binding methyltransferase superfamily.

It localises to the nucleus. The protein localises to the chromosome. It carries out the reaction L-lysyl-[histone] + S-adenosyl-L-methionine = N(6)-methyl-L-lysyl-[histone] + S-adenosyl-L-homocysteine + H(+). Histone methyltransferase. The protein is Histone-lysine N-methyltransferase SUVR3 (SUVR3) of Arabidopsis thaliana (Mouse-ear cress).